We begin with the raw amino-acid sequence, 644 residues long: Protein SNOWY COTYLEDON 3 (644 aa).

Disordered stretches follow at residues 1 to 129, 162 to 252, and 290 to 414; these read MVAA…TRTE, ETAT…DGRL, and SDTD…SRVR. The span at 53-77 shows a compositional bias: low complexity; sequence SPSPSHSTTTTTTTATSTSTSSSSS. Positions 91–112 are enriched in polar residues; sequence LSRTTNSASNLVYTPSSLPKRS. Residues 172–190 show a composition bias toward basic and acidic residues; it reads CTPERRRATPVRDQRENSK. 2 stretches are compositionally biased toward polar residues: residues 290-302 and 314-332; these read SDTDSVSSGSTNG and TRSLPRNGMASTKFWQETN. Composition is skewed to low complexity over residues 343–370 and 397–412; these read SPQCSSPSSRISSISSKFSQSKRFSSDS and ATATSAPARTSSSPSR. The short motif at 463–466 is the QWRF motif element; sequence QWRF.

It belongs to the QWRF family. Expressed in young developing tissues, such as seedlings, roots, flowers, buds and young siliques, and to a lesser extent in mature green tissues.

Its subcellular location is the peroxisome. Probable microtubule-associated peroxisomal protein required for chloroplast biogenesis and for the formation of the prolamellar body and prothylakoids in etioplasts. Not involved in peroxisomal metabolism, including mobilization of storage compounds during germination, fatty acid beta-oxydation or photorespiration. This Arabidopsis thaliana (Mouse-ear cress) protein is Protein SNOWY COTYLEDON 3 (SCO3).